Reading from the N-terminus, the 169-residue chain is Transcription antitermination protein NusB (169 aa).

Belongs to the NusB family.

Functionally, involved in transcription antitermination. Required for transcription of ribosomal RNA (rRNA) genes. Binds specifically to the boxA antiterminator sequence of the ribosomal RNA (rrn) operons. The polypeptide is Transcription antitermination protein NusB (Rhodococcus opacus (strain B4)).